Reading from the N-terminus, the 94-residue chain is Pyrimidine/purine nucleoside phosphorylase (94 aa).

Belongs to the nucleoside phosphorylase PpnP family.

The catalysed reaction is a purine D-ribonucleoside + phosphate = a purine nucleobase + alpha-D-ribose 1-phosphate. It carries out the reaction adenosine + phosphate = alpha-D-ribose 1-phosphate + adenine. The enzyme catalyses cytidine + phosphate = cytosine + alpha-D-ribose 1-phosphate. It catalyses the reaction guanosine + phosphate = alpha-D-ribose 1-phosphate + guanine. The catalysed reaction is inosine + phosphate = alpha-D-ribose 1-phosphate + hypoxanthine. It carries out the reaction thymidine + phosphate = 2-deoxy-alpha-D-ribose 1-phosphate + thymine. The enzyme catalyses uridine + phosphate = alpha-D-ribose 1-phosphate + uracil. It catalyses the reaction xanthosine + phosphate = alpha-D-ribose 1-phosphate + xanthine. In terms of biological role, catalyzes the phosphorolysis of diverse nucleosides, yielding D-ribose 1-phosphate and the respective free bases. Can use uridine, adenosine, guanosine, cytidine, thymidine, inosine and xanthosine as substrates. Also catalyzes the reverse reactions. The polypeptide is Pyrimidine/purine nucleoside phosphorylase (Escherichia coli (strain ATCC 8739 / DSM 1576 / NBRC 3972 / NCIMB 8545 / WDCM 00012 / Crooks)).